We begin with the raw amino-acid sequence, 353 residues long: Photosystem II protein D1 (353 aa).

N-acetylthreonine is present on T2. The residue at position 2 (T2) is a Phosphothreonine. 3 helical membrane passes run 29–46 (YIGWFGVLMIPTLLTATS), 118–133 (HFLLGVACYMGREWEL), and 142–156 (WIAVAYSAPVAAATA). H118 provides a ligand contact to chlorophyll a. Position 126 (Y126) interacts with pheophytin a. Positions 170 and 189 each coordinate [CaMn4O5] cluster. The chain crosses the membrane as a helical span at residues 197 to 218 (FHMLGVAGVFGGSLFSAMHGSL). H198 contributes to the chlorophyll a binding site. Residues H215 and 264 to 265 (SF) each bind a quinone. H215 provides a ligand contact to Fe cation. H272 is a binding site for Fe cation. A helical membrane pass occupies residues 274–288 (FLAAWPVVGIWFTAL). [CaMn4O5] cluster-binding residues include H332, E333, D342, and A344. Residues 345–353 (AVEAPSING) constitute a propeptide that is removed on maturation.

It belongs to the reaction center PufL/M/PsbA/D family. PSII is composed of 1 copy each of membrane proteins PsbA, PsbB, PsbC, PsbD, PsbE, PsbF, PsbH, PsbI, PsbJ, PsbK, PsbL, PsbM, PsbT, PsbX, PsbY, PsbZ, Psb30/Ycf12, at least 3 peripheral proteins of the oxygen-evolving complex and a large number of cofactors. It forms dimeric complexes. The cofactor is The D1/D2 heterodimer binds P680, chlorophylls that are the primary electron donor of PSII, and subsequent electron acceptors. It shares a non-heme iron and each subunit binds pheophytin, quinone, additional chlorophylls, carotenoids and lipids. D1 provides most of the ligands for the Mn4-Ca-O5 cluster of the oxygen-evolving complex (OEC). There is also a Cl(-1) ion associated with D1 and D2, which is required for oxygen evolution. The PSII complex binds additional chlorophylls, carotenoids and specific lipids.. Tyr-161 forms a radical intermediate that is referred to as redox-active TyrZ, YZ or Y-Z. In terms of processing, C-terminally processed by CTPA; processing is essential to allow assembly of the oxygen-evolving complex and thus photosynthetic growth.

The protein localises to the plastid. It localises to the chloroplast thylakoid membrane. The catalysed reaction is 2 a plastoquinone + 4 hnu + 2 H2O = 2 a plastoquinol + O2. In terms of biological role, photosystem II (PSII) is a light-driven water:plastoquinone oxidoreductase that uses light energy to abstract electrons from H(2)O, generating O(2) and a proton gradient subsequently used for ATP formation. It consists of a core antenna complex that captures photons, and an electron transfer chain that converts photonic excitation into a charge separation. The D1/D2 (PsbA/PsbD) reaction center heterodimer binds P680, the primary electron donor of PSII as well as several subsequent electron acceptors. This Illicium oligandrum (Star anise) protein is Photosystem II protein D1.